A 375-amino-acid polypeptide reads, in one-letter code: MTDDNPAIVIDNGSGMCKAGFAGDDAPRAVFPTVVGRPKRETVLVGSTHKEEYIGDEALAKRGVLKLSYPIEHGQIKDWDMMEKVWHHCYFNELRAQPSDHAVLLTEAPKNPKANREKICQIMFETFAVPAFYVQVQAVLALYSSGRTTGIVIDTGDGVTHTVPVYEGYSLPHAVLRSEIAGKELTDFCQINLQENGASFTTSAEFEIVRDIKEKLCFVALDYESVLAASMESANYTKTYELPDGVVITVNQARFKTPELLFRPELNNSDMDGIHQLCYKTIQKCDIDIRSELYSNVVLSGGSSMFAGLPERLEKELLDLIPAGKRVRISSPEDRKYSAWVGGSVLGSLATFESMWVSSQEYQENGASIANRKCM.

It belongs to the actin family.

It is found in the cytoplasm. The protein resides in the cytoskeleton. It catalyses the reaction ATP + H2O = ADP + phosphate + H(+). Its function is as follows. Actins are highly conserved proteins that are involved in various types of cell motility and are ubiquitously expressed in all eukaryotic cells. This is Actin from Giardia intestinalis (Giardia lamblia).